Here is a 473-residue protein sequence, read N- to C-terminus: MSMKISEKKFNDRVGDGIQDSFMRGAVTSAQTRLYTNRLKAADELGNWEEWRELGEQIRQHTLENLDYYLMQLSENVSKRGGNVFFAKTKEEAANYIQEVAKKKNAKKVVKSKSMVTEEISMNHALEEIGCEVVESDLGEYILQVDNDPPSHIVAPALHKNKTQIRDVFKEKLGYENSDDPYEMTKFVRKHLRKKFMDAEIGITGCNFAVANTGSLCLVTNEGNADLVMSIPKTQIAVMGMERMVPTMEELDVLVGLLCRSAVGQKLTSYVTVAGPIQEEEIDGPEEFHLVIVDNGRSEILGSEFRQVLQCIRCAACINVCPVYRHVGGHSYGSIYPGPIGAVLSPLLGGYDDYKELPYASSLCGACTEACPVKIPLHDLLLKHRQVIVEKEGRAPLAEKLAMKMFSMGASSAALYKIGSKMAPVALSPFTSGNRVTKGVGPLKNWTEIREFPAPSKERFRDWYKEHKKGGDK.

2 4Fe-4S ferredoxin-type domains span residues 302 to 332 (GSEF…GHSY) and 351 to 380 (YDDY…LHDL). 7 residues coordinate [4Fe-4S] cluster: Cys311, Cys314, Cys317, Cys321, Cys364, Cys367, and Cys371.

It belongs to the LutB/YkgF family.

Functionally, is involved in L-lactate degradation and allows cells to grow with lactate as the sole carbon source. Has probably a role as an electron transporter during oxidation of L-lactate. The chain is Lactate utilization protein B from Bacillus cytotoxicus (strain DSM 22905 / CIP 110041 / 391-98 / NVH 391-98).